The following is a 329-amino-acid chain: Diaminopimelate epimerase (329 aa).

Substrate is bound by residues N14 and N73. Residue C82 is the Proton donor of the active site. Residues 83–84 (GN), N170, N206, and 224–225 (ER) contribute to the substrate site. Residue C233 is the Proton acceptor of the active site. 234-235 (GT) is a binding site for substrate.

It belongs to the diaminopimelate epimerase family. Homodimer.

The protein resides in the cytoplasm. It catalyses the reaction (2S,6S)-2,6-diaminopimelate = meso-2,6-diaminopimelate. It functions in the pathway amino-acid biosynthesis; L-lysine biosynthesis via DAP pathway; DL-2,6-diaminopimelate from LL-2,6-diaminopimelate: step 1/1. Catalyzes the stereoinversion of LL-2,6-diaminopimelate (L,L-DAP) to meso-diaminopimelate (meso-DAP), a precursor of L-lysine and an essential component of the bacterial peptidoglycan. The chain is Diaminopimelate epimerase from Listeria monocytogenes serotype 4a (strain HCC23).